The sequence spans 196 residues: Probable thymidylate kinase (196 aa).

9–16 (GIDGSGKT) lines the ATP pocket.

This sequence belongs to the thymidylate kinase family.

The catalysed reaction is dTMP + ATP = dTDP + ADP. In Methanococcus aeolicus (strain ATCC BAA-1280 / DSM 17508 / OCM 812 / Nankai-3), this protein is Probable thymidylate kinase.